Here is an 821-residue protein sequence, read N- to C-terminus: Leucine--tRNA ligase (821 aa).

Positions 44 to 54 match the 'HIGH' region motif; sequence PYPSGRIHMGH. The 'KMSKS' region motif lies at 589-593; that stretch reads KMSKS. Position 592 (Lys592) interacts with ATP.

This sequence belongs to the class-I aminoacyl-tRNA synthetase family.

The protein localises to the cytoplasm. The catalysed reaction is tRNA(Leu) + L-leucine + ATP = L-leucyl-tRNA(Leu) + AMP + diphosphate. In Campylobacter curvus (strain 525.92), this protein is Leucine--tRNA ligase.